A 239-amino-acid polypeptide reads, in one-letter code: Seed lectin beta chain (239 aa).

D-glucose-binding residues include aspartate 88 and glycine 106. Residues glutamate 126 and aspartate 128 each contribute to the Mn(2+) site. Residues aspartate 128, asparagine 132, and aspartate 137 each coordinate Ca(2+). Mn(2+) contacts are provided by aspartate 137 and histidine 142. D-glucose is bound by residues glycine 217 and alanine 218.

It belongs to the leguminous lectin family. In terms of assembly, tetramer consisting of heterodimers of alpha and beta chains.

Its function is as follows. Galactose-binding lectin. Agglutinates human erythrocytes, and requires Ca(2+) and Mn(2+) ions for full agglutinating activity. Has antifungal activity against Fusarium sp., A.niger and A.flavus. In Spatholobus parviflorus (Butea parviflora), this protein is Seed lectin beta chain.